Reading from the N-terminus, the 160-residue chain is G-protein-signaling modulator 3 (160 aa).

The segment at 1 to 55 is disordered; the sequence is MEAERPQEEEDGEQGPPQDEEGWPPPNSTTRPWRSAPPSPPPPGTRHTALGPRSA. Acidic residues predominate over residues 7 to 22; it reads QEEEDGEQGPPQDEEG. S35, S39, S56, and S59 each carry phosphoserine. Over residues 35–44 the composition is skewed to pro residues; that stretch reads SAPPSPPPPG. T62 is subject to Phosphothreonine. 3 GoLoco domains span residues 62-84, 104-126, and 132-155; these read TELLLDLVAEAQSRRLEEQRATF, REQLYSTILSHQCQRMEAQRSEP, and GQELLELLLRVQGGGRMEEQRSRP.

Expressed in heart, placenta, lung and liver.

It localises to the cytoplasm. Functionally, interacts with subunit of G(i) alpha proteins and regulates the activation of G(i) alpha proteins. In Homo sapiens (Human), this protein is G-protein-signaling modulator 3 (GPSM3).